The chain runs to 350 residues: Nicotinate-nucleotide--dimethylbenzimidazole phosphoribosyltransferase (350 aa).

The active-site Proton acceptor is E316.

The protein belongs to the CobT family.

It carries out the reaction 5,6-dimethylbenzimidazole + nicotinate beta-D-ribonucleotide = alpha-ribazole 5'-phosphate + nicotinate + H(+). It functions in the pathway nucleoside biosynthesis; alpha-ribazole biosynthesis; alpha-ribazole from 5,6-dimethylbenzimidazole: step 1/2. Its function is as follows. Catalyzes the synthesis of alpha-ribazole-5'-phosphate from nicotinate mononucleotide (NAMN) and 5,6-dimethylbenzimidazole (DMB). The sequence is that of Nicotinate-nucleotide--dimethylbenzimidazole phosphoribosyltransferase from Pseudomonas syringae pv. tomato (strain ATCC BAA-871 / DC3000).